Reading from the N-terminus, the 285-residue chain is NADPH-dependent 7-cyano-7-deazaguanine reductase (285 aa).

Residue 91 to 93 (IES) participates in substrate binding. 93–94 (SK) is an NADPH binding site. The active-site Thioimide intermediate is the C191. D198 acts as the Proton donor in catalysis. Residue 230–231 (HE) participates in substrate binding. Residue 259 to 260 (RG) participates in NADPH binding.

This sequence belongs to the GTP cyclohydrolase I family. QueF type 2 subfamily. Homodimer.

It is found in the cytoplasm. It carries out the reaction 7-aminomethyl-7-carbaguanine + 2 NADP(+) = 7-cyano-7-deazaguanine + 2 NADPH + 3 H(+). It participates in tRNA modification; tRNA-queuosine biosynthesis. Functionally, catalyzes the NADPH-dependent reduction of 7-cyano-7-deazaguanine (preQ0) to 7-aminomethyl-7-deazaguanine (preQ1). The polypeptide is NADPH-dependent 7-cyano-7-deazaguanine reductase (Legionella pneumophila (strain Paris)).